The primary structure comprises 343 residues: Vancomycin/teicoplanin A-type resistance protein VanA (343 aa).

ATP contacts are provided by residues K133, 169–171, 177–178, 207–214, and F241; these read FVK, SS, and EQAVSGCE. The region spanning 137-338 is the ATP-grasp domain; it reads YIVAKNAGIA…LPELIDRLIV (202 aa). Position 244 (H244) interacts with substrate. An ATP-binding site is contributed by 304-305; sequence NE. Mg(2+)-binding residues include E305 and N307.

It belongs to the D-alanine--D-alanine ligase family. The cofactor is Mg(2+). Mn(2+) is required as a cofactor.

The protein resides in the cell membrane. The enzyme catalyses (R)-lactate + D-alanine + ATP = D-alanyl-(R)-lactate + ADP + phosphate. In terms of biological role, required for high-level resistance to glycopeptide antibiotics. D-Ala--D-Ala ligase of altered specificity which catalyzes ester bond formation between D-Ala and various D-hydroxy acids; produces a peptidoglycan which does not terminate in D-alanine but in D-lactate, thus preventing vancomycin or teicoplanin binding. The protein is Vancomycin/teicoplanin A-type resistance protein VanA (vanA) of Enterococcus faecium (Streptococcus faecium).